Reading from the N-terminus, the 179-residue chain is Ribosome maturation factor RimM (179 aa).

A PRC barrel domain is found at 102–179; the sequence is DGEYYWYQLE…EMKVDWDADF (78 aa).

It belongs to the RimM family. In terms of assembly, binds ribosomal protein uS19.

It localises to the cytoplasm. Its function is as follows. An accessory protein needed during the final step in the assembly of 30S ribosomal subunit, possibly for assembly of the head region. Essential for efficient processing of 16S rRNA. May be needed both before and after RbfA during the maturation of 16S rRNA. It has affinity for free ribosomal 30S subunits but not for 70S ribosomes. This is Ribosome maturation factor RimM from Pseudomonas syringae pv. syringae (strain B728a).